A 428-amino-acid polypeptide reads, in one-letter code: Histidinol dehydrogenase (428 aa).

Positions 129, 188, and 211 each coordinate NAD(+). Substrate contacts are provided by serine 234, glutamine 256, and histidine 259. The Zn(2+) site is built by glutamine 256 and histidine 259. Catalysis depends on proton acceptor residues glutamate 323 and histidine 324. Substrate-binding residues include histidine 324, aspartate 357, glutamate 411, and histidine 416. Residue aspartate 357 coordinates Zn(2+). Histidine 416 serves as a coordination point for Zn(2+).

Belongs to the histidinol dehydrogenase family. Zn(2+) is required as a cofactor.

It carries out the reaction L-histidinol + 2 NAD(+) + H2O = L-histidine + 2 NADH + 3 H(+). It participates in amino-acid biosynthesis; L-histidine biosynthesis; L-histidine from 5-phospho-alpha-D-ribose 1-diphosphate: step 9/9. In terms of biological role, catalyzes the sequential NAD-dependent oxidations of L-histidinol to L-histidinaldehyde and then to L-histidine. The sequence is that of Histidinol dehydrogenase from Caulobacter vibrioides (strain ATCC 19089 / CIP 103742 / CB 15) (Caulobacter crescentus).